The sequence spans 295 residues: Polyprenyl transferase dpmaC (295 aa).

The next 8 membrane-spanning stretches (helical) occupy residues 39 to 59 (LFCV…NDWI), 84 to 104 (QAFV…HVML), 109 to 124 (VHVI…YPFL), 131 to 151 (KLHI…AIPG), 168 to 188 (YCLP…TAYS), 213 to 233 (LVLV…LTQF), 237 to 257 (WLWV…LALF), and 271 to 291 (SNFV…LLKA).

This sequence belongs to the UbiA prenyltransferase family. Mg(2+) serves as cofactor.

The protein resides in the membrane. Its pathway is secondary metabolite biosynthesis; terpenoid biosynthesis. In terms of biological role, polyprenyl transferase; part of the gene cluster that mediates the biosynthesis of the diterpenoid pyrones subglutinols A and B. The first step of the pathway is the synthesis of the alpha-pyrone moiety by the polyketide synthase dpmaA via condensation of one acetyl-CoA starter unit with 3 malonyl-CoA units and 2 methylations. The alpha-pyrone is then combined with geranylgeranyl pyrophosphate (GGPP) formed by the GGPP synthase dpmaD through the action of the prenyltransferase dpmaC to yield a linear alpha-pyrone diterpenoid. Subsequent steps in the diterpenoid pyrone biosynthetic pathway involve the decalin core formation, which is initiated by the epoxidation of the C10-C11 olefin by the FAD-dependent oxidoreductase dpmaE, and is followed by a cyclization cascade catalyzed by the terpene cyclase dpmaB. The dehydrogenase dpmaF is then involved in tetrahydrofuran (THF) ring formation at the C5 unit to complete the formation of subglutinols A and B. The protein is Polyprenyl transferase dpmaC of Metarhizium anisopliae (Entomophthora anisopliae).